We begin with the raw amino-acid sequence, 289 residues long: Phospholipase A1 (289 aa).

A signal peptide spans 1–20 (MRTLQGWLLPVFMLPMAVYA). Residues 21-52 (QEATVKEVHDAPAVRGSIIANMLQEHDNPFTL) are Periplasmic-facing. Residues 53–65 (YPYDTNYLIYTQT) traverse the membrane as a beta stranded segment. Topologically, residues 66–84 (SDLNKEAIASYDWAENARK) are extracellular. The chain crosses the membrane as a beta stranded span at residues 85–99 (DEVKFQLSLAFPLWR). The Periplasmic portion of the chain corresponds to 100-105 (GILGPN). Residues 106–118 (SVLGASYTQKSWW) traverse the membrane as a beta stranded segment. Over 119–128 (QLSNSEESSP) the chain is Extracellular. S126 contacts Ca(2+). A beta stranded transmembrane segment spans residues 129 to 148 (FRETNYEPQLFLGFATDYRF). The Periplasmic portion of the chain corresponds to 149–150 (AG). The chain crosses the membrane as a beta stranded span at residues 151-164 (WTLRDVEMGYNHDS). H162 (proton acceptor) is an active-site residue. S164 serves as the catalytic Nucleophile. At 165–173 (NGRSDPTSR) the chain is on the extracellular side. Ca(2+)-binding residues include R167 and S172. Residues 174–186 (SWNRLYTRLMAEN) form a beta stranded membrane-spanning segment. The Periplasmic segment spans residues 187–188 (GN). Residues 189 to 198 (WLVEVKPWYV) traverse the membrane as a beta stranded segment. Over 199-216 (VGNTDDNPDITKYMGYYQ) the chain is Extracellular. D204 serves as a coordination point for Ca(2+). Residues 217–223 (LKIGYHL) form a beta stranded membrane-spanning segment. At 224–225 (GD) the chain is on the periplasmic side. Residues 226-234 (AVLSAKGQY) traverse the membrane as a beta stranded segment. The Extracellular portion of the chain corresponds to 235–241 (NWNTGYG). Residues 242–250 (GAELGLSYP) form a beta stranded membrane-spanning segment. Residues 251-255 (ITKHV) are Periplasmic-facing. Residues 256–265 (RLYTQVYSGY) traverse the membrane as a beta stranded segment. Residues 266–274 (GESLIDYNF) are Extracellular-facing. A beta stranded transmembrane segment spans residues 275–286 (NQTRVGVGVMLN). Residues 287–289 (DLF) lie on the Periplasmic side of the membrane.

The protein belongs to the phospholipase A1 family. As to quaternary structure, homodimer; dimerization is reversible, and the dimeric form is the active one. Requires Ca(2+) as cofactor.

The protein resides in the cell outer membrane. The catalysed reaction is a 1,2-diacyl-sn-glycero-3-phosphocholine + H2O = a 2-acyl-sn-glycero-3-phosphocholine + a fatty acid + H(+). It carries out the reaction a 1,2-diacyl-sn-glycero-3-phosphocholine + H2O = a 1-acyl-sn-glycero-3-phosphocholine + a fatty acid + H(+). In terms of biological role, hydrolysis of phosphatidylcholine with phospholipase A2 (EC 3.1.1.4) and phospholipase A1 (EC 3.1.1.32) activities. This chain is Phospholipase A1 (pldA), found in Escherichia coli O157:H7.